A 442-amino-acid chain; its full sequence is Inner membrane protein PPF-1, chloroplastic (442 aa).

Topologically, residues 1 to 108 (MAKTLISSPS…EFVLKVLKDG (108 aa)) are lumenal. Residues 109 to 129 (LSSVHVPYSYGFAIILLTVIV) traverse the membrane as a helical segment. Residues 130 to 183 (KAATLPLTKQQVESTLAMQNLQPKIKAIQERYAGNQERIQLETSRLYTQAGVNP) are Stromal-facing. The helical transmembrane segment at 184–204 (LAGCLPTLATIPVWIGLYQAL) threads the bilayer. Residues 205–296 (SNVANEGLLT…QKNTLLIFKF (92 aa)) are Lumenal-facing. The chain crosses the membrane as a helical span at residues 297–317 (LPLMIGYFSLSVPSGLTIYWF). At 318-442 (TNNVLSTAQQ…SKRSKRKPVA (125 aa)) the chain is on the stromal side. Disordered regions lie at residues 350–371 (AGQA…RQLK) and 390–442 (PLAS…KPVA). The span at 358–371 (SKPEKGGERFRQLK) shows a compositional bias: basic and acidic residues. Positions 414–427 (ESNTSKVSQEVQSF) are enriched in polar residues. A compositionally biased stretch (basic residues) spans 431-442 (RRSKRSKRKPVA).

This sequence belongs to the OXA1/ALB3/YidC (TC 2.A.9.2) family. As to expression, highly expressed in apical buds. Low levels of expression in leaves. Not expressed in roots, and stems.

It is found in the plastid. It localises to the chloroplast thylakoid membrane. May be required for the insertion of some integral membrane proteins into the chloroplast thylakoid membrane. May play a role in inhibiting senescence. The protein is Inner membrane protein PPF-1, chloroplastic (PPF-1) of Pisum sativum (Garden pea).